The following is a 98-amino-acid chain: DNA-binding protein Fis (98 aa).

Residues 74–93 (QTRAATMMGINRGTLRKKLK) constitute a DNA-binding region (H-T-H motif).

The protein belongs to the transcriptional regulatory Fis family. As to quaternary structure, homodimer.

Activates ribosomal RNA transcription. Plays a direct role in upstream activation of rRNA promoters. This chain is DNA-binding protein Fis, found in Vibrio atlanticus (strain LGP32) (Vibrio splendidus (strain Mel32)).